A 131-amino-acid polypeptide reads, in one-letter code: Spermatocyte protein spe-27 (131 aa).

Residues 1-17 (MNKSLIFLLSFAYSCYS) form the signal peptide.

Functionally, required for spermiogenesis. This chain is Spermatocyte protein spe-27 (spe-27), found in Caenorhabditis elegans.